Here is a 355-residue protein sequence, read N- to C-terminus: NADH-quinone oxidoreductase subunit H (355 aa).

The next 8 membrane-spanning stretches (helical) occupy residues 25–45 (IVRI…LILW), 91–111 (WLYL…WAVI), 126–146 (LLYA…AGWA), 170–190 (MGFA…SEIV), 205–225 (FLSW…VSGI), 253–273 (MAFA…SALA), 290–310 (FIPG…VFIW), and 330–350 (VFLP…MSPL).

It belongs to the complex I subunit 1 family. NDH-1 is composed of 14 different subunits. Subunits NuoA, H, J, K, L, M, N constitute the membrane sector of the complex.

The protein localises to the cell inner membrane. It carries out the reaction a quinone + NADH + 5 H(+)(in) = a quinol + NAD(+) + 4 H(+)(out). NDH-1 shuttles electrons from NADH, via FMN and iron-sulfur (Fe-S) centers, to quinones in the respiratory chain. The immediate electron acceptor for the enzyme in this species is believed to be ubiquinone. Couples the redox reaction to proton translocation (for every two electrons transferred, four hydrogen ions are translocated across the cytoplasmic membrane), and thus conserves the redox energy in a proton gradient. This subunit may bind ubiquinone. The chain is NADH-quinone oxidoreductase subunit H from Burkholderia ambifaria (strain MC40-6).